A 379-amino-acid polypeptide reads, in one-letter code: Cobalt-precorrin-5B C(1)-methyltransferase (379 aa).

Belongs to the CbiD family.

It catalyses the reaction Co-precorrin-5B + S-adenosyl-L-methionine = Co-precorrin-6A + S-adenosyl-L-homocysteine. It participates in cofactor biosynthesis; adenosylcobalamin biosynthesis; cob(II)yrinate a,c-diamide from sirohydrochlorin (anaerobic route): step 6/10. Catalyzes the methylation of C-1 in cobalt-precorrin-5B to form cobalt-precorrin-6A. The polypeptide is Cobalt-precorrin-5B C(1)-methyltransferase (Citrobacter koseri (strain ATCC BAA-895 / CDC 4225-83 / SGSC4696)).